We begin with the raw amino-acid sequence, 654 residues long: Macrolide export ATP-binding/permease protein MacB (654 aa).

The ABC transporter domain maps to 6 to 244 (IELRGLRREF…RAGDAPTRQP (239 aa)). 42 to 49 (GASGSGKS) is a binding site for ATP. 4 helical membrane-spanning segments follow: residues 278-298 (FLTM…VAVG), 527-547 (LTLM…IGVM), 584-604 (VVCL…AALF), and 619-639 (SIAA…YLPA).

The protein belongs to the ABC transporter superfamily. Macrolide exporter (TC 3.A.1.122) family. In terms of assembly, homodimer.

The protein resides in the cell inner membrane. Functionally, non-canonical ABC transporter that contains transmembrane domains (TMD), which form a pore in the inner membrane, and an ATP-binding domain (NBD), which is responsible for energy generation. Confers resistance against macrolides. In Rhodopseudomonas palustris (strain HaA2), this protein is Macrolide export ATP-binding/permease protein MacB.